Here is a 363-residue protein sequence, read N- to C-terminus: tRNA-specific 2-thiouridylase MnmA (363 aa).

ATP-binding positions include Gly-13 to Ser-20 and Met-39. Residues Asn-99 to Asp-101 are interaction with target base in tRNA. Cys-104 (nucleophile) is an active-site residue. Cys-104 and Cys-200 form a disulfide bridge. Gly-128 contacts ATP. The segment at Lys-150–Gln-152 is interaction with tRNA. Residue Cys-200 is the Cysteine persulfide intermediate of the active site. The interaction with tRNA stretch occupies residues Arg-310–Tyr-311.

The protein belongs to the MnmA/TRMU family.

The protein localises to the cytoplasm. The enzyme catalyses S-sulfanyl-L-cysteinyl-[protein] + uridine(34) in tRNA + AH2 + ATP = 2-thiouridine(34) in tRNA + L-cysteinyl-[protein] + A + AMP + diphosphate + H(+). Its function is as follows. Catalyzes the 2-thiolation of uridine at the wobble position (U34) of tRNA, leading to the formation of s(2)U34. The polypeptide is tRNA-specific 2-thiouridylase MnmA (Ruthia magnifica subsp. Calyptogena magnifica).